The sequence spans 515 residues: 2,3-bisphosphoglycerate-independent phosphoglycerate mutase (515 aa).

Aspartate 14 and serine 64 together coordinate Mn(2+). Serine 64 acts as the Phosphoserine intermediate in catalysis. Substrate-binding positions include histidine 125, 155-156 (RD), arginine 187, arginine 193, 263-266 (RADR), and lysine 337. Residues aspartate 404, histidine 408, aspartate 445, histidine 446, and histidine 464 each contribute to the Mn(2+) site.

The protein belongs to the BPG-independent phosphoglycerate mutase family. In terms of assembly, monomer. The cofactor is Mn(2+).

The catalysed reaction is (2R)-2-phosphoglycerate = (2R)-3-phosphoglycerate. It functions in the pathway carbohydrate degradation; glycolysis; pyruvate from D-glyceraldehyde 3-phosphate: step 3/5. Catalyzes the interconversion of 2-phosphoglycerate and 3-phosphoglycerate. The protein is 2,3-bisphosphoglycerate-independent phosphoglycerate mutase of Yersinia pseudotuberculosis serotype O:1b (strain IP 31758).